Consider the following 383-residue polypeptide: L-Ala-D/L-Glu epimerase (383 aa).

Substrate-binding positions include arginine 68, tyrosine 94, and 198–200 (KVK). Mg(2+) contacts are provided by aspartate 224, glutamate 251, and aspartate 276. Substrate contacts are provided by residues lysine 298, 326-328 (CMT), and 348-350 (DLD).

This sequence belongs to the mandelate racemase/muconate lactonizing enzyme family. The cofactor is Mg(2+).

It catalyses the reaction L-alanyl-L-glutamate = L-alanyl-D-glutamate. Catalyzes the epimerization of L-Ala-D-Glu to L-Ala-L-Glu and may play a role in the metabolism of the murein peptide, of which L-Ala-D-Glu is a component. Is also able to catalyze the epimerization of L-Ala-D-Asp, L-Ala-L-Glu, L-Ala-L-Ser, L-Ala-L-Pro, L-Ala-L-L-Val, L-Ala-L-Thr, L-Ala-L-Leu, L-Ala-L-Ile and L-Gly-L-Glu (in vitro). The polypeptide is L-Ala-D/L-Glu epimerase (Bacteroides thetaiotaomicron (strain ATCC 29148 / DSM 2079 / JCM 5827 / CCUG 10774 / NCTC 10582 / VPI-5482 / E50)).